Reading from the N-terminus, the 114-residue chain is Biofilm growth-associated repressor (114 aa).

Residues 17–111 (DMEKRANEVA…ALYTIFCTQE (95 aa)) form the HTH arsR-type domain. The segment at residues 51 to 74 (VGELEQQIGIGQPTLSQQLGVLRE) is a DNA-binding region (H-T-H motif).

In terms of biological role, represses an operon that probably comprises itself, PD_1892, PD_1893, PD_1894 and blh. Binds to a palindromic AT-rich sequence spanning the -10 region of the blh promoter and blocks transcription of the operon. The protein is Biofilm growth-associated repressor (bigR) of Xylella fastidiosa (strain Temecula1 / ATCC 700964).